Reading from the N-terminus, the 574-residue chain is MNPGAARTPALRILALGALLWPAARPWELTILHTNDVHSRLEQTSEDSSKCVNASRCVGGVARLATKVHQIRRAEPHVLLLDAGDQYQGTIWFTVYKGTEVAHFMNALGYDAMALGNHEFDNGVEGLIDPLLKEVNFPILSANIKAKGPLASKISGLYSPYKILTVGDEVVGIVGYTSKETPFLSNPGTNLVFEDEITALQPEVDKLKTLNVNKIIALGHSGFEVDKLIAQKVKGVDVVVGGHSNTFLYTGNPPSKEVPAGQYPFIVTSDDGRKVPVVQAYAFGKYLGYLKVEFDEKGNVVTSHGNPILLNSSIPEDPNIKADINKWRVKLDNYSTQELGKTIVYLDGTAQSCRFRECNMGNLICDAMINNNLRHPDEMSWNHVSMCILNGGGIRSPIDERNNGTITWENLAAVLPFGGTFDLVQLKGSTLKKAFEHSVHRYGQATGEFLQVGGIHVVYDISRNPGDRVVKLEVLCTQCRVPSYEPLRMDKVYKVILPSFLVSGGDGFQMIKDEKIKHDSGDQDINVVSGYISKMKVLYPAVEGRIQFSAGSHCCGSFSLIFLSVLAVIIILYQ.

The first 26 residues, 1-26 (MNPGAARTPALRILALGALLWPAARP), serve as a signal peptide directing secretion. Zn(2+) is bound by residues D36 and H38. A disulfide bridge links C51 with C57. A glycan (N-linked (GlcNAc...) asparagine) is linked at N53. The Zn(2+) site is built by D85, N117, H220, and H243. 2 N-linked (GlcNAc...) asparagine glycosylation sites follow: N311 and N333. Intrachain disulfides connect C353–C358 and C365–C387. Residue R354 participates in AMP binding. R354 provides a ligand contact to IMP. Residues N390 and R395 each contribute to the AMP site. IMP contacts are provided by N390 and R395. N-linked (GlcNAc...) asparagine glycosylation is present at N403. Residue F417 coordinates AMP. Residue F417 coordinates IMP. A disulfide bridge links C476 with C479. Residues F500 and D506 each coordinate AMP. IMP is bound by residues F500 and D506. S549 carries the GPI-anchor amidated serine lipid modification. Residues 550-574 (AGSHCCGSFSLIFLSVLAVIIILYQ) constitute a propeptide, removed in mature form.

The protein belongs to the 5'-nucleotidase family. As to quaternary structure, homodimer. It depends on Zn(2+) as a cofactor.

Its subcellular location is the cell membrane. The catalysed reaction is a ribonucleoside 5'-phosphate + H2O = a ribonucleoside + phosphate. It carries out the reaction a 2'-deoxyribonucleoside 5'-phosphate + H2O = a 2'-deoxyribonucleoside + phosphate. It catalyses the reaction dTMP + H2O = thymidine + phosphate. The enzyme catalyses CMP + H2O = cytidine + phosphate. The catalysed reaction is IMP + H2O = inosine + phosphate. It carries out the reaction AMP + H2O = adenosine + phosphate. It catalyses the reaction GMP + H2O = guanosine + phosphate. The enzyme catalyses UMP + H2O = uridine + phosphate. The catalysed reaction is dAMP + H2O = 2'-deoxyadenosine + phosphate. It carries out the reaction dCMP + H2O = 2'-deoxycytidine + phosphate. In terms of biological role, catalyzes the hydrolysis of nucleotide monophosphates, releasing inorganic phosphate and the corresponding nucleoside, with AMP being the preferred substrate. Shows a preference for ribonucleotide monophosphates over their equivalent deoxyribose forms. Other substrates include IMP, UMP, GMP, CMP, dAMP, dCMP, dTMP, NAD and NMN. The sequence is that of 5'-nucleotidase (NT5E) from Bos taurus (Bovine).